The primary structure comprises 121 residues: Ribonuclease P protein component (121 aa).

The protein belongs to the RnpA family. Consists of a catalytic RNA component (M1 or rnpB) and a protein subunit.

The catalysed reaction is Endonucleolytic cleavage of RNA, removing 5'-extranucleotides from tRNA precursor.. RNaseP catalyzes the removal of the 5'-leader sequence from pre-tRNA to produce the mature 5'-terminus. It can also cleave other RNA substrates such as 4.5S RNA. The protein component plays an auxiliary but essential role in vivo by binding to the 5'-leader sequence and broadening the substrate specificity of the ribozyme. The chain is Ribonuclease P protein component from Nitrosomonas eutropha (strain DSM 101675 / C91 / Nm57).